The primary structure comprises 369 residues: Nudix hydrolase 8 (369 aa).

Residues 188–318 enclose the Nudix hydrolase domain; the sequence is SHQVGVGGFV…GDKMFKRVIE (131 aa). The short motif at 225–246 is the Nudix box element; sequence GFINESEEIFSGAVREVKEETG. Glu-240 and Glu-244 together coordinate Mg(2+).

This sequence belongs to the Nudix hydrolase family. Requires Mg(2+) as cofactor. Mn(2+) serves as cofactor. As to expression, expressed in roots, stems and, at lower level, leaves.

Its function is as follows. Probably mediates the hydrolysis of some nucleoside diphosphate derivatives. May be involved in plant immunity and act as a positive regulator of defense response through salicylic acid (SA) signaling. The sequence is that of Nudix hydrolase 8 (NUDT8) from Arabidopsis thaliana (Mouse-ear cress).